The primary structure comprises 146 residues: Oxygen-independent coproporphyrinogen III oxidase (146 aa).

S-adenosyl-L-methionine is bound at residue Tyr-54. [4Fe-4S] cluster-binding residues include Cys-60 and Cys-64. Phe-66 provides a ligand contact to S-adenosyl-L-methionine. Cys-67 lines the [4Fe-4S] cluster pocket. S-adenosyl-L-methionine is bound by residues 111 to 112 (GT) and Glu-143.

It belongs to the anaerobic coproporphyrinogen-III oxidase family. As to quaternary structure, monomer. [4Fe-4S] cluster serves as cofactor.

It localises to the cytoplasm. It carries out the reaction coproporphyrinogen III + 2 S-adenosyl-L-methionine = protoporphyrinogen IX + 2 5'-deoxyadenosine + 2 L-methionine + 2 CO2. The protein operates within porphyrin-containing compound metabolism; protoporphyrin-IX biosynthesis; protoporphyrinogen-IX from coproporphyrinogen-III (AdoMet route): step 1/1. Involved in the heme biosynthesis. Catalyzes the anaerobic oxidative decarboxylation of propionate groups of rings A and B of coproporphyrinogen III to yield the vinyl groups in protoporphyrinogen IX. The sequence is that of Oxygen-independent coproporphyrinogen III oxidase (hemN) from Mannheimia haemolytica (Pasteurella haemolytica).